A 65-amino-acid polypeptide reads, in one-letter code: Small ribosomal subunit protein bS21 (65 aa).

Belongs to the bacterial ribosomal protein bS21 family.

In Flavobacterium psychrophilum (strain ATCC 49511 / DSM 21280 / CIP 103535 / JIP02/86), this protein is Small ribosomal subunit protein bS21.